The sequence spans 186 residues: Peptidoglycan-recognition protein SD (186 aa).

The signal sequence occupies residues 1–18 (MTWIGLLIVGLTAIAVQG). The 123-residue stretch at 47-169 (AVIAHTAGGA…RQVSATKSPG (123 aa)) folds into the N-acetylmuramoyl-L-alanine amidase domain. A disulfide bond links Cys57 and Cys63. Asn181 carries an N-linked (GlcNAc...) asparagine glycan.

Belongs to the N-acetylmuramoyl-L-alanine amidase 2 family. As to expression, in larvae, it is mainly expressed in fat body. Also expressed in uninduced hemocytes and mbn-2 cells.

Its subcellular location is the secreted. Its function is as follows. Peptidoglycan-recognition protein that plays a key role in innate immunity by binding to peptidoglycans (PGN) of Gram-positive bacteria and activating the Toll pathway. Has no activity against on Gram-negative bacteria and fungi. Shows some partial redundancy with PRPGP-SA in Gram-positive bacteria recognition. May act by activating the proteolytic cleavage of Spatzle and the subsequent activation of Toll pathway. Recognizes S.aureus PGN. The chain is Peptidoglycan-recognition protein SD (PGRP-SD) from Drosophila melanogaster (Fruit fly).